Here is a 162-residue protein sequence, read N- to C-terminus: NADH-quinone oxidoreductase subunit I 2 (162 aa).

4Fe-4S ferredoxin-type domains are found at residues 52-82 and 93-122; these read LRRY…IEAG and VRYD…EGPN. 8 residues coordinate [4Fe-4S] cluster: cysteine 62, cysteine 65, cysteine 68, cysteine 72, cysteine 102, cysteine 105, cysteine 108, and cysteine 112.

This sequence belongs to the complex I 23 kDa subunit family. As to quaternary structure, NDH-1 is composed of 14 different subunits. Subunits NuoA, H, J, K, L, M, N constitute the membrane sector of the complex. [4Fe-4S] cluster serves as cofactor.

Its subcellular location is the cell inner membrane. It carries out the reaction a quinone + NADH + 5 H(+)(in) = a quinol + NAD(+) + 4 H(+)(out). Functionally, NDH-1 shuttles electrons from NADH, via FMN and iron-sulfur (Fe-S) centers, to quinones in the respiratory chain. The immediate electron acceptor for the enzyme in this species is believed to be ubiquinone. Couples the redox reaction to proton translocation (for every two electrons transferred, four hydrogen ions are translocated across the cytoplasmic membrane), and thus conserves the redox energy in a proton gradient. The polypeptide is NADH-quinone oxidoreductase subunit I 2 (Rhodopseudomonas palustris (strain BisB5)).